Consider the following 156-residue polypeptide: Arginine repressor (156 aa).

The protein belongs to the ArgR family.

It is found in the cytoplasm. The protein operates within amino-acid biosynthesis; L-arginine biosynthesis [regulation]. Functionally, regulates arginine biosynthesis genes. This Escherichia fergusonii (strain ATCC 35469 / DSM 13698 / CCUG 18766 / IAM 14443 / JCM 21226 / LMG 7866 / NBRC 102419 / NCTC 12128 / CDC 0568-73) protein is Arginine repressor.